Here is a 605-residue protein sequence, read N- to C-terminus: UvrABC system protein C (605 aa).

The GIY-YIG domain occupies 14 to 92 (QSCGVYKMIG…IKSLKPSYNI (79 aa)). The UVR domain occupies 202 to 237 (KEVQRQLFSTMEKCSREMNYELAAVYRDRLKFLQQI).

The protein belongs to the UvrC family. As to quaternary structure, interacts with UvrB in an incision complex.

Its subcellular location is the cytoplasm. Functionally, the UvrABC repair system catalyzes the recognition and processing of DNA lesions. UvrC both incises the 5' and 3' sides of the lesion. The N-terminal half is responsible for the 3' incision and the C-terminal half is responsible for the 5' incision. This is UvrABC system protein C from Wolbachia pipientis subsp. Culex pipiens (strain wPip).